Here is a 611-residue protein sequence, read N- to C-terminus: DNA mismatch repair protein MutL (611 aa).

Residues 364-384 are disordered; sequence NVNSKPSKYRPATSPTVPKYT.

It belongs to the DNA mismatch repair MutL/HexB family.

This protein is involved in the repair of mismatches in DNA. It is required for dam-dependent methyl-directed DNA mismatch repair. May act as a 'molecular matchmaker', a protein that promotes the formation of a stable complex between two or more DNA-binding proteins in an ATP-dependent manner without itself being part of a final effector complex. This is DNA mismatch repair protein MutL from Rickettsia bellii (strain OSU 85-389).